A 141-amino-acid chain; its full sequence is 3-hydroxyacyl-[acyl-carrier-protein] dehydratase FabZ (141 aa).

The active site involves H49.

The protein belongs to the thioester dehydratase family. FabZ subfamily.

It localises to the cytoplasm. The catalysed reaction is a (3R)-hydroxyacyl-[ACP] = a (2E)-enoyl-[ACP] + H2O. Involved in unsaturated fatty acids biosynthesis. Catalyzes the dehydration of short chain beta-hydroxyacyl-ACPs and long chain saturated and unsaturated beta-hydroxyacyl-ACPs. The protein is 3-hydroxyacyl-[acyl-carrier-protein] dehydratase FabZ of Clostridium acetobutylicum (strain ATCC 824 / DSM 792 / JCM 1419 / IAM 19013 / LMG 5710 / NBRC 13948 / NRRL B-527 / VKM B-1787 / 2291 / W).